The following is a 446-amino-acid chain: Chromosomal replication initiator protein DnaA (446 aa).

Residues 1-72 are domain I, interacts with DnaA modulators; that stretch reads MKNISDLWNQ…ADTIYDLTGE (72 aa). A domain II region spans residues 72–109; sequence EELSIKFVIPQNQNEEDFMPKSPIKKMSKEEPADFPQN. Positions 110-326 are domain III, AAA+ region; it reads MLNPKYTFDT…GALIRVVAYS (217 aa). Gly-154, Gly-156, Lys-157, and Thr-158 together coordinate ATP. Residues 327 to 446 are domain IV, binds dsDNA; that stretch reads SLINKDINAD…QIKEIKEQLR (120 aa).

This sequence belongs to the DnaA family. As to quaternary structure, oligomerizes as a right-handed, spiral filament on DNA at oriC.

Its subcellular location is the cytoplasm. Functionally, plays an essential role in the initiation and regulation of chromosomal replication. ATP-DnaA binds to the origin of replication (oriC) to initiate formation of the DNA replication initiation complex once per cell cycle. Binds the DnaA box (a 9 base pair repeat at the origin) and separates the double-stranded (ds)DNA. Forms a right-handed helical filament on oriC DNA; dsDNA binds to the exterior of the filament while single-stranded (ss)DNA is stabiized in the filament's interior. The ATP-DnaA-oriC complex binds and stabilizes one strand of the AT-rich DNA unwinding element (DUE), permitting loading of DNA polymerase. After initiation quickly degrades to an ADP-DnaA complex that is not apt for DNA replication. Binds acidic phospholipids. The chain is Chromosomal replication initiator protein DnaA from Bacillus licheniformis (strain ATCC 14580 / DSM 13 / JCM 2505 / CCUG 7422 / NBRC 12200 / NCIMB 9375 / NCTC 10341 / NRRL NRS-1264 / Gibson 46).